The primary structure comprises 322 residues: Phosphatidylserine decarboxylase proenzyme (322 aa).

Residues Asp-90, His-147, and Ser-254 each act as charge relay system; for autoendoproteolytic cleavage activity in the active site. The active-site Schiff-base intermediate with substrate; via pyruvic acid; for decarboxylase activity is Ser-254. Ser-254 is modified (pyruvic acid (Ser); by autocatalysis). Positions 290–322 are disordered; the sequence is FVTPDSEPAPLPAEEIEAEHDASPLVDDKKDQV. The segment covering 308–322 has biased composition (basic and acidic residues); sequence EHDASPLVDDKKDQV.

This sequence belongs to the phosphatidylserine decarboxylase family. PSD-B subfamily. Prokaryotic type I sub-subfamily. In terms of assembly, heterodimer of a large membrane-associated beta subunit and a small pyruvoyl-containing alpha subunit. It depends on pyruvate as a cofactor. In terms of processing, is synthesized initially as an inactive proenzyme. Formation of the active enzyme involves a self-maturation process in which the active site pyruvoyl group is generated from an internal serine residue via an autocatalytic post-translational modification. Two non-identical subunits are generated from the proenzyme in this reaction, and the pyruvate is formed at the N-terminus of the alpha chain, which is derived from the carboxyl end of the proenzyme. The autoendoproteolytic cleavage occurs by a canonical serine protease mechanism, in which the side chain hydroxyl group of the serine supplies its oxygen atom to form the C-terminus of the beta chain, while the remainder of the serine residue undergoes an oxidative deamination to produce ammonia and the pyruvoyl prosthetic group on the alpha chain. During this reaction, the Ser that is part of the protease active site of the proenzyme becomes the pyruvoyl prosthetic group, which constitutes an essential element of the active site of the mature decarboxylase.

Its subcellular location is the cell membrane. It catalyses the reaction a 1,2-diacyl-sn-glycero-3-phospho-L-serine + H(+) = a 1,2-diacyl-sn-glycero-3-phosphoethanolamine + CO2. It participates in phospholipid metabolism; phosphatidylethanolamine biosynthesis; phosphatidylethanolamine from CDP-diacylglycerol: step 2/2. Catalyzes the formation of phosphatidylethanolamine (PtdEtn) from phosphatidylserine (PtdSer). The chain is Phosphatidylserine decarboxylase proenzyme from Escherichia fergusonii (strain ATCC 35469 / DSM 13698 / CCUG 18766 / IAM 14443 / JCM 21226 / LMG 7866 / NBRC 102419 / NCTC 12128 / CDC 0568-73).